A 208-amino-acid polypeptide reads, in one-letter code: dITP/XTP pyrophosphatase (208 aa).

11–16 contributes to the substrate binding site; the sequence is TGNAKK. Aspartate 73 acts as the Proton acceptor in catalysis. Residue aspartate 73 coordinates Mg(2+). Residues serine 74, 157-160, lysine 180, and 185-186 each bind substrate; these read FGYD and HR.

It belongs to the HAM1 NTPase family. Homodimer. Mg(2+) serves as cofactor.

The catalysed reaction is XTP + H2O = XMP + diphosphate + H(+). The enzyme catalyses dITP + H2O = dIMP + diphosphate + H(+). It carries out the reaction ITP + H2O = IMP + diphosphate + H(+). Pyrophosphatase that catalyzes the hydrolysis of nucleoside triphosphates to their monophosphate derivatives, with a high preference for the non-canonical purine nucleotides XTP (xanthosine triphosphate), dITP (deoxyinosine triphosphate) and ITP. Seems to function as a house-cleaning enzyme that removes non-canonical purine nucleotides from the nucleotide pool, thus preventing their incorporation into DNA/RNA and avoiding chromosomal lesions. The polypeptide is dITP/XTP pyrophosphatase (Rhodopirellula baltica (strain DSM 10527 / NCIMB 13988 / SH1)).